The chain runs to 138 residues: ER-derived vesicles protein ERV14 (138 aa).

Topologically, residues 2–6 (GAWLF) are cytoplasmic. A helical transmembrane segment spans residues 7–27 (ILAVVVNCINLFGQVHFTILY). The Extracellular segment spans residues 28–52 (ADLEADYINPIELCSKVNKLITPEA). The chain crosses the membrane as a helical span at residues 53-73 (ALHGALSLLFLLNGYWFVFLL). The Cytoplasmic portion of the chain corresponds to 74-111 (NLPVLAYNLNKIYNKVQLLDATEIFRTLGKHKRESFLK). A helical transmembrane segment spans residues 112-132 (LGFHLLMFFFYLYRMIMALIA). Residues 133–138 (ESGDDF) lie on the Extracellular side of the membrane.

This sequence belongs to the cornichon family.

The protein resides in the endoplasmic reticulum membrane. Its subcellular location is the golgi apparatus membrane. Could regulate export of the bud site and axial growth sites selection protein AXL2 and possibly other secretory proteins from the endoplasmic reticulum in COPII-coated vesicles. Seems to be required for axial budding pattern in haploid cells. The chain is ER-derived vesicles protein ERV14 (ERV14) from Saccharomyces cerevisiae (strain ATCC 204508 / S288c) (Baker's yeast).